Here is a 516-residue protein sequence, read N- to C-terminus: 2-isopropylmalate synthase (516 aa).

One can recognise a Pyruvate carboxyltransferase domain in the interval 5–267 (IIIFDTTLRD…STDINIKEIH (263 aa)). Residues Asp-14, His-202, His-204, and Asn-238 each contribute to the Mn(2+) site. The segment at 393-516 (KLEYFDVQSK…VNKELERLQK (124 aa)) is regulatory domain.

Belongs to the alpha-IPM synthase/homocitrate synthase family. LeuA type 1 subfamily. Homodimer. Mn(2+) is required as a cofactor.

Its subcellular location is the cytoplasm. The catalysed reaction is 3-methyl-2-oxobutanoate + acetyl-CoA + H2O = (2S)-2-isopropylmalate + CoA + H(+). It participates in amino-acid biosynthesis; L-leucine biosynthesis; L-leucine from 3-methyl-2-oxobutanoate: step 1/4. Catalyzes the condensation of the acetyl group of acetyl-CoA with 3-methyl-2-oxobutanoate (2-ketoisovalerate) to form 3-carboxy-3-hydroxy-4-methylpentanoate (2-isopropylmalate). The protein is 2-isopropylmalate synthase of Buchnera aphidicola subsp. Cinara cedri (strain Cc).